The primary structure comprises 189 residues: Ribonuclease HII (189 aa).

The RNase H type-2 domain occupies 1-189; it reads MIAGVDEAGR…IAALLKNNKK (189 aa). Residues aspartate 6, glutamate 7, and aspartate 98 each contribute to the a divalent metal cation site.

The protein belongs to the RNase HII family. Requires Mn(2+) as cofactor. Mg(2+) serves as cofactor.

The protein localises to the cytoplasm. The catalysed reaction is Endonucleolytic cleavage to 5'-phosphomonoester.. Functionally, endonuclease that specifically degrades the RNA of RNA-DNA hybrids. The chain is Ribonuclease HII from Dichelobacter nodosus (strain VCS1703A).